We begin with the raw amino-acid sequence, 92 residues long: MSKIYIVAYVYGVVQGVGFRYSTQRQAQQLGVTGYAKNCDDGSVEVVASGNPQAVERLMEWIRQGGPRGARVDRLLTEPYPPTPFETFSIRY.

Positions 5-92 (YIVAYVYGVV…TPFETFSIRY (88 aa)) constitute an Acylphosphatase-like domain. Active-site residues include Arg20 and Asn38.

This sequence belongs to the acylphosphatase family.

The catalysed reaction is an acyl phosphate + H2O = a carboxylate + phosphate + H(+). This is Acylphosphatase (acyP) from Yersinia pseudotuberculosis serotype O:1b (strain IP 31758).